The primary structure comprises 308 residues: Ribosomal RNA large subunit methyltransferase F (308 aa).

It belongs to the methyltransferase superfamily. METTL16/RlmF family.

The protein localises to the cytoplasm. It catalyses the reaction adenosine(1618) in 23S rRNA + S-adenosyl-L-methionine = N(6)-methyladenosine(1618) in 23S rRNA + S-adenosyl-L-homocysteine + H(+). In terms of biological role, specifically methylates the adenine in position 1618 of 23S rRNA. This Escherichia coli (strain K12 / MC4100 / BW2952) protein is Ribosomal RNA large subunit methyltransferase F.